Consider the following 208-residue polypeptide: FMN-dependent NADH:quinone oxidoreductase 2 (208 aa).

It belongs to the azoreductase type 1 family. As to quaternary structure, homodimer. FMN serves as cofactor.

It catalyses the reaction 2 a quinone + NADH + H(+) = 2 a 1,4-benzosemiquinone + NAD(+). The enzyme catalyses N,N-dimethyl-1,4-phenylenediamine + anthranilate + 2 NAD(+) = 2-(4-dimethylaminophenyl)diazenylbenzoate + 2 NADH + 2 H(+). Quinone reductase that provides resistance to thiol-specific stress caused by electrophilic quinones. Its function is as follows. Also exhibits azoreductase activity. Catalyzes the reductive cleavage of the azo bond in aromatic azo compounds to the corresponding amines. The sequence is that of FMN-dependent NADH:quinone oxidoreductase 2 from Bacillus anthracis.